The primary structure comprises 168 residues: G/U mismatch-specific DNA glycosylase (168 aa).

It belongs to the uracil-DNA glycosylase (UDG) superfamily. TDG/mug family. In terms of assembly, binds DNA as a monomer.

It is found in the cytoplasm. It carries out the reaction Specifically hydrolyzes mismatched double-stranded DNA and polynucleotides, releasing free uracil.. In terms of biological role, excises ethenocytosine and uracil, which can arise by alkylation or deamination of cytosine, respectively, from the corresponding mispairs with guanine in ds-DNA. It is capable of hydrolyzing the carbon-nitrogen bond between the sugar-phosphate backbone of the DNA and the mispaired base. The complementary strand guanine functions in substrate recognition. Required for DNA damage lesion repair in stationary-phase cells. In Escherichia coli O9:H4 (strain HS), this protein is G/U mismatch-specific DNA glycosylase.